Here is a 565-residue protein sequence, read N- to C-terminus: DNA-directed RNA polymerase subunit beta C-terminal section (565 aa).

The protein belongs to the RNA polymerase beta chain family. In plastids the minimal PEP RNA polymerase catalytic core is composed of four subunits: alpha, beta, beta', and beta''. When a (nuclear-encoded) sigma factor is associated with the core the holoenzyme is formed, which can initiate transcription.

The protein localises to the plastid. The protein resides in the chloroplast. The enzyme catalyses RNA(n) + a ribonucleoside 5'-triphosphate = RNA(n+1) + diphosphate. DNA-dependent RNA polymerase catalyzes the transcription of DNA into RNA using the four ribonucleoside triphosphates as substrates. The polypeptide is DNA-directed RNA polymerase subunit beta C-terminal section (rpoB2) (Tetradesmus obliquus (Green alga)).